The chain runs to 233 residues: Large ribosomal subunit protein uL1 (233 aa).

The protein belongs to the universal ribosomal protein uL1 family. In terms of assembly, part of the 50S ribosomal subunit.

Its function is as follows. Binds directly to 23S rRNA. The L1 stalk is quite mobile in the ribosome, and is involved in E site tRNA release. Protein L1 is also a translational repressor protein, it controls the translation of the L11 operon by binding to its mRNA. The protein is Large ribosomal subunit protein uL1 of Shewanella frigidimarina (strain NCIMB 400).